A 232-amino-acid polypeptide reads, in one-letter code: Chaperone protein LpfB (232 aa).

An N-terminal signal peptide occupies residues 1–23 (MNRSRLISCTALVLALIAQNSFA).

Belongs to the periplasmic pilus chaperone family.

Its subcellular location is the periplasm. In terms of biological role, required for the biogenesis of long polar fimbria; binds and interact with LpfA. The protein is Chaperone protein LpfB (lpfB) of Salmonella typhimurium (strain LT2 / SGSC1412 / ATCC 700720).